The chain runs to 295 residues: Nucleotide-binding protein BPUM_3115 (295 aa).

Gly-16–Thr-23 contacts ATP. Asp-67–Gly-70 is a binding site for GTP.

The protein belongs to the RapZ-like family.

Functionally, displays ATPase and GTPase activities. In Bacillus pumilus (strain SAFR-032), this protein is Nucleotide-binding protein BPUM_3115.